Reading from the N-terminus, the 111-residue chain is Cell division protein FtsB (111 aa).

Residues 1-3 (MGK) are Cytoplasmic-facing. Residues 4-21 (LTLLLLILLGWLQYSLWL) traverse the membrane as a helical segment. The Periplasmic segment spans residues 22–111 (GKNGIHDYVR…TNTPSNNIQR (90 aa)). Residues 33-63 (KDDVVVQQGNNAKLKDRNEQLFAEIDDLNGG) are a coiled coil. The interval 90-111 (ESNHRNANTAPSTNTPSNNIQR) is disordered. A compositionally biased stretch (low complexity) spans 95 to 111 (NANTAPSTNTPSNNIQR).

Belongs to the FtsB family. Part of a complex composed of FtsB, FtsL and FtsQ.

The protein localises to the cell inner membrane. In terms of biological role, essential cell division protein. May link together the upstream cell division proteins, which are predominantly cytoplasmic, with the downstream cell division proteins, which are predominantly periplasmic. The protein is Cell division protein FtsB of Pectobacterium carotovorum subsp. carotovorum (strain PC1).